Here is an 833-residue protein sequence, read N- to C-terminus: DNA ligase (833 aa).

NAD(+)-binding positions include 35–39, 84–85, and E115; these read DVEYD and SL. The active-site N6-AMP-lysine intermediate is K117. Residues R138, E175, K292, and K316 each contribute to the NAD(+) site. The Zn(2+) site is built by C410, C413, C428, and C434. One can recognise a BRCT domain in the interval 750–833; the sequence is VQAGPLDGQT…AFLSEHGQAV (84 aa).

Belongs to the NAD-dependent DNA ligase family. LigA subfamily. It depends on Mg(2+) as a cofactor. Requires Mn(2+) as cofactor.

It catalyses the reaction NAD(+) + (deoxyribonucleotide)n-3'-hydroxyl + 5'-phospho-(deoxyribonucleotide)m = (deoxyribonucleotide)n+m + AMP + beta-nicotinamide D-nucleotide.. In terms of biological role, DNA ligase that catalyzes the formation of phosphodiester linkages between 5'-phosphoryl and 3'-hydroxyl groups in double-stranded DNA using NAD as a coenzyme and as the energy source for the reaction. It is essential for DNA replication and repair of damaged DNA. This chain is DNA ligase, found in Xanthomonas campestris pv. campestris (strain 8004).